Here is a 307-residue protein sequence, read N- to C-terminus: Elongation factor Ts (307 aa).

The segment at threonine 80 to valine 83 is involved in Mg(2+) ion dislocation from EF-Tu.

It belongs to the EF-Ts family.

It localises to the cytoplasm. Associates with the EF-Tu.GDP complex and induces the exchange of GDP to GTP. It remains bound to the aminoacyl-tRNA.EF-Tu.GTP complex up to the GTP hydrolysis stage on the ribosome. This is Elongation factor Ts from Bradyrhizobium sp. (strain ORS 278).